The following is a 200-amino-acid chain: Probable GTP-binding protein EngB (200 aa).

The EngB-type G domain maps to 22–195 (GKDEIAFVGR…INNICSGINY (174 aa)). GTP is bound by residues 30–37 (GRSNVGKS), 57–61 (GKTRL), 75–78 (DLPG), 142–145 (TKSD), and 174–176 (FSS). Mg(2+) is bound by residues S37 and T59.

It belongs to the TRAFAC class TrmE-Era-EngA-EngB-Septin-like GTPase superfamily. EngB GTPase family. Requires Mg(2+) as cofactor.

Its function is as follows. Necessary for normal cell division and for the maintenance of normal septation. The sequence is that of Probable GTP-binding protein EngB from Clostridium acetobutylicum (strain ATCC 824 / DSM 792 / JCM 1419 / IAM 19013 / LMG 5710 / NBRC 13948 / NRRL B-527 / VKM B-1787 / 2291 / W).